A 616-amino-acid chain; its full sequence is Dihydroxy-acid dehydratase (616 aa).

D81 contributes to the Mg(2+) binding site. C122 contacts [2Fe-2S] cluster. Residues D123 and K124 each coordinate Mg(2+). Position 124 is an N6-carboxylysine (K124). C195 provides a ligand contact to [2Fe-2S] cluster. E491 provides a ligand contact to Mg(2+). Residue S517 is the Proton acceptor of the active site.

This sequence belongs to the IlvD/Edd family. As to quaternary structure, homodimer. [2Fe-2S] cluster is required as a cofactor. It depends on Mg(2+) as a cofactor.

The enzyme catalyses (2R)-2,3-dihydroxy-3-methylbutanoate = 3-methyl-2-oxobutanoate + H2O. It catalyses the reaction (2R,3R)-2,3-dihydroxy-3-methylpentanoate = (S)-3-methyl-2-oxopentanoate + H2O. It participates in amino-acid biosynthesis; L-isoleucine biosynthesis; L-isoleucine from 2-oxobutanoate: step 3/4. The protein operates within amino-acid biosynthesis; L-valine biosynthesis; L-valine from pyruvate: step 3/4. Functionally, functions in the biosynthesis of branched-chain amino acids. Catalyzes the dehydration of (2R,3R)-2,3-dihydroxy-3-methylpentanoate (2,3-dihydroxy-3-methylvalerate) into 2-oxo-3-methylpentanoate (2-oxo-3-methylvalerate) and of (2R)-2,3-dihydroxy-3-methylbutanoate (2,3-dihydroxyisovalerate) into 2-oxo-3-methylbutanoate (2-oxoisovalerate), the penultimate precursor to L-isoleucine and L-valine, respectively. The sequence is that of Dihydroxy-acid dehydratase from Escherichia coli (strain SMS-3-5 / SECEC).